The chain runs to 444 residues: MDLPLSDEQIRELDESTLDYLLWRNKGIDITQLANSLQVDAPTLQEDTNRLPLLARKWTAIARLQRRIMSLEQNIRDLREASIEMNAPAFSPESSESARIAWIAPAQPRASITLESPVTGVRLHPELAVVFVSTEQGRLHCFDLMDITLPLASIQAHTRAITSVDVFCWQQTTYVVTGSKDMQVRVFTWSAGQGLKLLRSFAGHEHVVSGVRIWVGPRTTNIGGGSLLLASCSRDTSVKIWDVNSGWCLKSFQPHSDWVRCLDVYGEFLITGCQDSTLRLTHWPSGNGLSVGLGHDFPVESVRFIGSLQDAVTTEGRTNNWLGHCVSTSRDRTSKIWLLPQPRRLPQRPPVPHSTDAQFLCKWTLRGHDSWIKAVGSRGDHVFTASDDKSVICWNWTNGQCLKKWNRIHQGFVTCIDLDDSNHPLKRKIMVTGGIDCKCHIFMQ.

The stretch at 59-87 forms a coiled coil; that stretch reads TAIARLQRRIMSLEQNIRDLREASIEMNA. 7 WD repeats span residues 113–152, 156–199, 204–251, 254–293, 307–347, 367–406, and 408–444; these read TLES…LPLA, AHTR…KLLR, HEHV…CLKS, PHSD…SVGL, SLQD…RLPQ, GHDS…KKWN, and IHQG…IFMQ.

This sequence belongs to the WD repeat LIS1/nudF family. Self-associates. Interacts with NDL1 and dynein.

The protein localises to the cytoplasm. It is found in the cytoskeleton. It localises to the spindle pole. Its function is as follows. Positively regulates the activity of the minus-end directed microtubule motor protein dynein. Plays a central role in positioning the mitotic spindle at the bud neck during cell division. Targets cytoplasmic dynein to microtubule plus ends, thereby promoting dynein-mediated microtubule sliding along the bud cortex and consequently the movement of the mitotic spindle to the bud neck. The protein is Nuclear distribution protein PAC1 of Zygosaccharomyces rouxii (strain ATCC 2623 / CBS 732 / NBRC 1130 / NCYC 568 / NRRL Y-229).